The following is a 374-amino-acid chain: Protein dip1 (374 aa).

It belongs to the LDB17 family.

Its subcellular location is the cytoplasm. The protein resides in the nucleus. It localises to the cell tip. May be involved in protein-linked oligosaccharide phosphorylation. The polypeptide is Protein dip1 (dip1) (Schizosaccharomyces pombe (strain 972 / ATCC 24843) (Fission yeast)).